The chain runs to 874 residues: Tyrosine-protein kinase receptor TYRO3 (874 aa).

An N-terminal signal peptide occupies residues 1–20 (MEVSLCILLFLLHFNEGIHG). Ig-like C2-type domains follow at residues 21-106 (VRFT…IISS) and 117-198 (PHFG…GTVH). Topologically, residues 21–411 (VRFTQKPFHQ…QAQTQRGHMW (391 aa)) are extracellular. C42 and C95 form a disulfide bridge. N-linked (GlcNAc...) asparagine glycans are attached at residues N135, N174, N217, N270, N305, and N373. C138 and C181 form a disulfide bridge. Fibronectin type-III domains lie at 202 to 297 (RPDS…TPQA) and 299 to 403 (PSAA…AMQA). Residues 412–432 (VGLLFGLLVATMVGLLLIVLI) form a helical membrane-spanning segment. The Cytoplasmic segment spans residues 433 to 874 (RNRGKETQFG…EEEEDVIINV (442 aa)). The Protein kinase domain maps to 497-768 (LTLGRMLGKG…QHLIDQLELL (272 aa)). Residues 503–511 (LGKGEFGSV) and K529 contribute to the ATP site. D634 serves as the catalytic Proton acceptor. Position 665 is a phosphotyrosine; by autocatalysis (Y665).

This sequence belongs to the protein kinase superfamily. Tyr protein kinase family. AXL/UFO subfamily.

It is found in the cell membrane. The enzyme catalyses L-tyrosyl-[protein] + ATP = O-phospho-L-tyrosyl-[protein] + ADP + H(+). In terms of biological role, may be involved in cell adhesion processes, particularly in the central nervous system. In Danio rerio (Zebrafish), this protein is Tyrosine-protein kinase receptor TYRO3 (tyro3).